Here is a 173-residue protein sequence, read N- to C-terminus: NADH-ubiquinone oxidoreductase chain 6 (173 aa).

5 helical membrane passes run 1–21, 27–47, 48–68, 87–107, and 139–159; these read MTYF…AVAS, YGVV…VSLG, VSFV…VVFV, VVGY…LGGL, and CGVG…FVVL.

The protein belongs to the complex I subunit 6 family. Core subunit of respiratory chain NADH dehydrogenase (Complex I) which is composed of 45 different subunits.

Its subcellular location is the mitochondrion inner membrane. It catalyses the reaction a ubiquinone + NADH + 5 H(+)(in) = a ubiquinol + NAD(+) + 4 H(+)(out). In terms of biological role, core subunit of the mitochondrial membrane respiratory chain NADH dehydrogenase (Complex I) which catalyzes electron transfer from NADH through the respiratory chain, using ubiquinone as an electron acceptor. Essential for the catalytic activity and assembly of complex I. This Gallus gallus (Chicken) protein is NADH-ubiquinone oxidoreductase chain 6 (MT-ND6).